Here is an 895-residue protein sequence, read N- to C-terminus: MSAETPITLNIDPQDLQVQTFTVEKLLEPLIIQVTTLVNCPQNPSSRKKGRSKRASVLLASVEEATWNLLDKGEKIAQEATVLKDELTASLEEVRKESEALKVSAERFTDDPCFLPKREAVVQAARALLAAVTRLLILADMIDVMCLLQHVSAFQRTFESLKNVANKSDLQKTYQKLGKELENLDYLAFKRQQDLKSPNQRDEIAGARASLKENSPLLHSICSACLEHSDVASLKASKDTVCEEIQNALNVISNASQGIQNMTTPPEPQAATLGSALDELENLIVLNPLTVTEEEIRPSLEKRLEAIISGAALLADSSCTRDLHRERIIAECNAIRQALQDLLSEYMNNAGKKERSNTLNIALDNMCKKTRDLRRQLRKAIIDHVSDSFLDTTVPLLVLIEAAKNGREKEIKEYAAIFHEHTSRLVEVANLACSMSTNEDGIKIVKIAANHLETLCPQIINAALALAARPKSQAVKNTMEMYKRTWENHIHVLTEAVDDITSIDDFLAVSESHILEDVNKCIIALRDQDADNLDRAAGAIRGRAARVAHIVTGEMDSYEPGAYTEGVMRNVNFLTSTVIPEFVTQVNVALEALSKSSLNVLDDNQFVDISKKIYDTIHDIRCSVMMIRTPEELEDVSDLEEEHEVRSHTSIQTEGKTDRAKMTQLPEAEKEKIAEQVADFKKVKSKLDAEIEIWDDTSNDIIVLAKNMCMIMMEMTDFTRGKGPLKHTTDVIYAAKMISESGSRMDVLARQIANQCPDPSCKQDLLAYLEQIKFYSHQLKICSQVKAEIQNLGGELIMSALDSVTSLIQAAKNLMNAVVQTVKMSYIASTKIIRIQSPAGPRHPVVMWRMKAPAKKPLIKREKPEETCAAVRRGSAKKKIHPLQVMSEFRGRQIY.

Residue serine 56 is modified to Phosphoserine. Residues 74–111 are a coiled coil; it reads EKIAQEATVLKDELTASLEEVRKESEALKVSAERFTDD. A Phosphoserine modification is found at serine 160. Residues 325 to 379 are a coiled coil; sequence RERIIAECNAIRQALQDLLSEYMNNAGKKERSNTLNIALDNMCKKTRDLRRQLRK. A phosphoserine mark is found at serine 637 and serine 647. Threonine 649 carries the phosphothreonine modification.

Belongs to the vinculin/alpha-catenin family. Interacts with CTNNB1. Interacts with PKP2. As to expression, predominantly expressed in heart and testis. Expressed at lower levels in brain, kidney, liver and skeletal muscle.

It localises to the cytoplasm. The protein resides in the cytoskeleton. Its subcellular location is the cell junction. It is found in the desmosome. May be involved in formation of stretch-resistant cell-cell adhesion complexes. In Homo sapiens (Human), this protein is Catenin alpha-3.